Reading from the N-terminus, the 304-residue chain is Fructose permease IIC component (304 aa).

The PTS EIIC type-2 domain occupies 1–304; the sequence is IHSADPKDPT…GIIKKPVEEK (304 aa). Transmembrane regions (helical) follow at residues 20-40, 62-82, 98-118, 140-160, 181-201, 214-234, 238-258, and 277-297; these read FIGSDNALKLIVAVLAGFIAM, NAGFLGGLIAGFLAGYVVILL, PVLIYPLLGIFITGVLMQFVI, NLVLMGIILGGMMAIDMGGPL, AAIMAGGMVPPLGIALATTFF, ITCYFMGAAFVTEGAIPFAAA, VIPAAVIGSAVAGGLTEFFRV, and LLYLLSIVIGAIVTAVILGII.

Its subcellular location is the cell membrane. Its function is as follows. The phosphoenolpyruvate-dependent sugar phosphotransferase system (PTS), a major carbohydrate active -transport system, catalyzes the phosphorylation of incoming sugar substrates concomitant with their translocation across the cell membrane. This system is involved in fructose transport. This chain is Fructose permease IIC component (fruA), found in Bacillus amyloliquefaciens (Bacillus velezensis).